The primary structure comprises 524 residues: Bifunctional purine biosynthesis protein PurH (524 aa).

The MGS-like domain maps to 1-144 (MTRRALVSVS…KNSAHVGVVV (144 aa)).

This sequence belongs to the PurH family.

The enzyme catalyses (6R)-10-formyltetrahydrofolate + 5-amino-1-(5-phospho-beta-D-ribosyl)imidazole-4-carboxamide = 5-formamido-1-(5-phospho-D-ribosyl)imidazole-4-carboxamide + (6S)-5,6,7,8-tetrahydrofolate. It catalyses the reaction IMP + H2O = 5-formamido-1-(5-phospho-D-ribosyl)imidazole-4-carboxamide. It participates in purine metabolism; IMP biosynthesis via de novo pathway; 5-formamido-1-(5-phospho-D-ribosyl)imidazole-4-carboxamide from 5-amino-1-(5-phospho-D-ribosyl)imidazole-4-carboxamide (10-formyl THF route): step 1/1. It functions in the pathway purine metabolism; IMP biosynthesis via de novo pathway; IMP from 5-formamido-1-(5-phospho-D-ribosyl)imidazole-4-carboxamide: step 1/1. This Anaeromyxobacter dehalogenans (strain 2CP-C) protein is Bifunctional purine biosynthesis protein PurH.